The sequence spans 156 residues: Cyclin-dependent kinase inhibitor 2A (156 aa).

Met-1 carries the post-translational modification N-acetylmethionine. A phosphoserine mark is found at Ser-7 and Ser-8. ANK repeat units lie at residues 11–40, 44–72, 77–106, and 110–139; these read PSADWLATAAARGRVEEVRALLEAGALPNA, YGRRPIQVMMMGSARVAELLLLHGAEPNC, TLTRPVHDAAREGFLDTLVVLHRAGARLDV, and WGRLPVDLAEELGHRDVARYLRAAAGGTRG. 2 positions are modified to phosphoserine: Ser-140 and Ser-152.

It belongs to the CDKN2 cyclin-dependent kinase inhibitor family. Heterodimer with CDK4 or CDK6. Predominant p16 complexes contained CDK6. Interacts with CDK4 (both 'T-172'-phosphorylated and non-phosphorylated forms); the interaction inhibits cyclin D-CDK4 kinase activity. Interacts with ISCO2. In terms of processing, phosphorylation seems to increase interaction with CDK4. As to expression, widely expressed but not detected in brain or skeletal muscle. Isoform 3 is pancreas-specific.

Its subcellular location is the cytoplasm. It localises to the nucleus. Functionally, acts as a negative regulator of the proliferation of normal cells by interacting strongly with CDK4 and CDK6. This inhibits their ability to interact with cyclins D and to phosphorylate the retinoblastoma protein. This is Cyclin-dependent kinase inhibitor 2A from Homo sapiens (Human).